The sequence spans 568 residues: Proline--tRNA ligase (568 aa).

This sequence belongs to the class-II aminoacyl-tRNA synthetase family. ProS type 1 subfamily. In terms of assembly, homodimer.

It is found in the cytoplasm. The enzyme catalyses tRNA(Pro) + L-proline + ATP = L-prolyl-tRNA(Pro) + AMP + diphosphate. In terms of biological role, catalyzes the attachment of proline to tRNA(Pro) in a two-step reaction: proline is first activated by ATP to form Pro-AMP and then transferred to the acceptor end of tRNA(Pro). As ProRS can inadvertently accommodate and process non-cognate amino acids such as alanine and cysteine, to avoid such errors it has two additional distinct editing activities against alanine. One activity is designated as 'pretransfer' editing and involves the tRNA(Pro)-independent hydrolysis of activated Ala-AMP. The other activity is designated 'posttransfer' editing and involves deacylation of mischarged Ala-tRNA(Pro). The misacylated Cys-tRNA(Pro) is not edited by ProRS. The polypeptide is Proline--tRNA ligase (Chromobacterium violaceum (strain ATCC 12472 / DSM 30191 / JCM 1249 / CCUG 213 / NBRC 12614 / NCIMB 9131 / NCTC 9757 / MK)).